Reading from the N-terminus, the 204-residue chain is Guanylate kinase (204 aa).

Residues 18-198 (GKLIIFSAPS…AKAETLEVIK (181 aa)) enclose the Guanylate kinase-like domain. 25–32 (APSGSGKS) is an ATP binding site.

This sequence belongs to the guanylate kinase family.

Its subcellular location is the cytoplasm. It carries out the reaction GMP + ATP = GDP + ADP. Essential for recycling GMP and indirectly, cGMP. This chain is Guanylate kinase, found in Bacteroides thetaiotaomicron (strain ATCC 29148 / DSM 2079 / JCM 5827 / CCUG 10774 / NCTC 10582 / VPI-5482 / E50).